The primary structure comprises 181 residues: uncharacterized protein (181 aa).

2 helical membrane passes run 24 to 46 (IAAVLISTSFVLFGFLALVLLNV) and 55 to 77 (GIVAIVSLIAIWVLMTAGVYILL).

The protein localises to the cell membrane. This is an uncharacterized protein from Archaeoglobus fulgidus (strain ATCC 49558 / DSM 4304 / JCM 9628 / NBRC 100126 / VC-16).